Here is a 297-residue protein sequence, read N- to C-terminus: MKRVRCNKVRTVTEVKPNNAKIRKTYDLNEFDLKNLSSLESFENTKVKLALSKYMAMINTLEMTQPLLEVFRNRADTRQIVAVVQATMGFVHNRFNPLVTHFTNKMEFVTTETAETIIPGEPILFTENDGALLCAIDRPSIVKMLSREFDLSVAAEPQTSNREVLVAKTLVSNKRKRRSSNDEGYEFIKRPRTFSEYNQCMDALSDFNVTEIETTQYLLLLLIVEHAYLHYYIFKNYGALEYSKSLMDHSLFVNKLRSSTNAKMHNLLLSKFRFTVEESDKTSSGTTSKFTVYNFNK.

This sequence belongs to the baculoviridae E27 family. As to quaternary structure, interacts with host mus209/PCNA, cdc2 and cdk6.

It localises to the virion membrane. Acts as a cyclin-like protein and plays a role in the modulation of host cell cycle. May promote G2/S arrest by interacting with host mus209/PCNA, cdc2 and cdk6. The cell cycle arrest is characterized by an intact nuclear envelope, concomitant with sustained activity of host cdc2. However, viral DNA replication still occurs in the arrested cells. The sequence is that of Occlusion-derived virus envelope protein E27 from Orgyia pseudotsugata multicapsid polyhedrosis virus (OpMNPV).